A 96-amino-acid chain; its full sequence is Co-chaperonin GroES (96 aa).

This sequence belongs to the GroES chaperonin family. Heptamer of 7 subunits arranged in a ring. Interacts with the chaperonin GroEL.

It localises to the cytoplasm. Functionally, together with the chaperonin GroEL, plays an essential role in assisting protein folding. The GroEL-GroES system forms a nano-cage that allows encapsulation of the non-native substrate proteins and provides a physical environment optimized to promote and accelerate protein folding. GroES binds to the apical surface of the GroEL ring, thereby capping the opening of the GroEL channel. The protein is Co-chaperonin GroES of Shewanella piezotolerans (strain WP3 / JCM 13877).